The chain runs to 341 residues: Anthranilate phosphoribosyltransferase (341 aa).

5-phospho-alpha-D-ribose 1-diphosphate is bound by residues G80, 83–84 (GD), T88, 90–93 (NIST), 108–116 (KHGNRAMSS), and S120. An anthranilate-binding site is contributed by G80. Residue S92 participates in Mg(2+) binding. N111 contacts anthranilate. R166 is an anthranilate binding site. 2 residues coordinate Mg(2+): D225 and E226.

It belongs to the anthranilate phosphoribosyltransferase family. In terms of assembly, homodimer. The cofactor is Mg(2+).

It carries out the reaction N-(5-phospho-beta-D-ribosyl)anthranilate + diphosphate = 5-phospho-alpha-D-ribose 1-diphosphate + anthranilate. The protein operates within amino-acid biosynthesis; L-tryptophan biosynthesis; L-tryptophan from chorismate: step 2/5. Catalyzes the transfer of the phosphoribosyl group of 5-phosphorylribose-1-pyrophosphate (PRPP) to anthranilate to yield N-(5'-phosphoribosyl)-anthranilate (PRA). In Roseiflexus sp. (strain RS-1), this protein is Anthranilate phosphoribosyltransferase.